Reading from the N-terminus, the 289-residue chain is Tumor necrosis factor receptor superfamily member 5 (289 aa).

An N-terminal signal peptide occupies residues 1–19 (MVSLPRLCALWGCLLTAVH). Residues 20 to 193 (LGQCVTCSDK…VICGLKSRMR (174 aa)) lie on the Extracellular side of the membrane. TNFR-Cys repeat units follow at residues 25–60 (TCSDKQYLHDGQCCDLCQPGSRLTSHCTALEKTQCH), 61–103 (PCDS…DTVC), 104–144 (TCKE…TVCH), and 145–187 (PCPV…VICG). Disulfide bonds link Cys-26–Cys-37, Cys-38–Cys-51, Cys-41–Cys-59, Cys-62–Cys-77, Cys-83–Cys-103, Cys-105–Cys-119, Cys-111–Cys-116, and Cys-125–Cys-143. N-linked (GlcNAc...) asparagine glycosylation is present at Asn-153. The chain crosses the membrane as a helical span at residues 194 to 215 (ALLVIPVVMGILITIFGVFLYI). Over 216 to 289 (KKVVKKPKDN…TDSIALRPLV (74 aa)) the chain is Cytoplasmic. The tract at residues 228 to 251 (LPPAARRQDPQEMEDYPGHNTAAP) is disordered.

In terms of assembly, monomer and homodimer. Interacts with TRAF1, TRAF2 and TRAF6. Interacts with TRAF3 and TRAF5. Interacts with TRAF6 and MAP3K8; the interaction is required for ERK activation.

It localises to the cell membrane. Its subcellular location is the secreted. Functionally, receptor for TNFSF5/CD40LG. Transduces TRAF6- and MAP3K8-mediated signals that activate ERK in macrophages and B cells, leading to induction of immunoglobulin secretion. The sequence is that of Tumor necrosis factor receptor superfamily member 5 (Cd40) from Mus musculus (Mouse).